Here is a 338-residue protein sequence, read N- to C-terminus: Phosphate acyltransferase (338 aa).

Belongs to the PlsX family. Homodimer. Probably interacts with PlsY.

It is found in the cytoplasm. It carries out the reaction a fatty acyl-[ACP] + phosphate = an acyl phosphate + holo-[ACP]. Its pathway is lipid metabolism; phospholipid metabolism. Catalyzes the reversible formation of acyl-phosphate (acyl-PO(4)) from acyl-[acyl-carrier-protein] (acyl-ACP). This enzyme utilizes acyl-ACP as fatty acyl donor, but not acyl-CoA. The sequence is that of Phosphate acyltransferase from Endomicrobium trichonymphae.